Reading from the N-terminus, the 239-residue chain is Small ribosomal subunit protein uS3c (239 aa).

Positions 43 to 139 constitute a KH type-2 domain; the sequence is IKNYIQKNRK…RFNISIEKVK (97 aa). Positions 50 to 74 are disordered; the sequence is NRKKGSNRKIESDSSSEVITHNRKM.

It belongs to the universal ribosomal protein uS3 family. In terms of assembly, part of the 30S ribosomal subunit.

It is found in the plastid. Its subcellular location is the chloroplast. This Triticum aestivum (Wheat) protein is Small ribosomal subunit protein uS3c (rps3).